Here is a 135-residue protein sequence, read N- to C-terminus: Large ribosomal subunit protein uL16c (135 aa).

It belongs to the universal ribosomal protein uL16 family. In terms of assembly, part of the 50S ribosomal subunit.

The protein resides in the plastid. It localises to the chloroplast. This chain is Large ribosomal subunit protein uL16c, found in Euglena gracilis.